Here is a 360-residue protein sequence, read N- to C-terminus: Methyltransferase pvhD (360 aa).

S-adenosyl-L-methionine is bound by residues 201-202 (SG), Asp-227, 251-252 (DL), Arg-267, and Arg-268.

Belongs to the class I-like SAM-binding methyltransferase superfamily. Cation-independent O-methyltransferase family.

Its pathway is secondary metabolite biosynthesis. Methyltransferase; part of the gene cluster that mediates the biosynthesis of varicidin A, an antifungal natural product containing a cis-octahydrodecalin core. The PKS module of pvhA together with the enoylreductase pvhC catalyze the formation of the polyketide unit which is then conjugated to L-isoleucine by the condensation domain of the NRPS module. Activity of the Dieckmann cyclase domain (RED) of pvhA results in release of an acyclic tetramate. The cytochrome P450 monooxygenase pvhE then catalyzes the oxidation of the C21 methyl group to a to carboxylate group. The methyltransferase pvhD then further methylates the pvhE product. The Diels-Alderase pvhB is able to catalyze Diels-Alder cycloaddition using both pvhE and pvhD products as substrates to form the decalin ring, yielding varicidin B and A, respectively. In Talaromyces variabilis (Penicillium variabile), this protein is Methyltransferase pvhD.